The sequence spans 361 residues: Alternative oxidase, mitochondrial (361 aa).

A helical transmembrane segment spans residues 156–178 (YLVRNVFLESVAGVPGMVAGMLR). The Fe cation site is built by glutamate 164, glutamate 203, and histidine 206. Residues 218–240 (WFMRLAVLGAQGVFFNAMFLSYL) form a helical membrane-spanning segment. Positions 254, 309, and 312 each coordinate Fe cation. Residues 318–328 (TLGNLDQNSDP) are compositionally biased toward polar residues. Positions 318–361 (TLGNLDQNSDPNPYASKYDNPNVPHPRKDIKYLKPSGWEREEVM) are disordered. The segment covering 343–361 (PRKDIKYLKPSGWEREEVM) has biased composition (basic and acidic residues).

This sequence belongs to the alternative oxidase family. Fe cation is required as a cofactor.

It is found in the mitochondrion inner membrane. Its function is as follows. Catalyzes cyanide-resistant oxygen consumption. May increase respiration when the cytochrome respiratory pathway is restricted, or in response to low temperatures. This is Alternative oxidase, mitochondrial (AOX1) from Venturia inaequalis (Apple scab fungus).